The chain runs to 458 residues: MADSTETNADTLRRELQKVLTEILNDGGGNDRDETEAFSGVVKAIDEAVRILTCLRKVESKIPESDISPVEVPKEFICTLSNTIMIEPVIIASGQTYEKRYITEWLKHERTCPKTKQVLSHRLWIPNHLISDLITQWCLVNKYDHQKPSDELVAELFTSDIEALLQRVSSSSSVADQIEAAKELRHQTKKFPNVRVFFVAGIHDSITRLLSPLSTLDEAVDSSLELQENIVTALFNLSILESNKTVIAENCLVIPLLTKSLKQGTDETRRNAAATLSSLSAIDSNKIIIGNSEAVKALIDLIEEGDLLATKEATSTVFNLCIVLENKGKVVSAGLIHAATKKIKAGSNVDELLSLLALISTHNRAVEEMDKLGFIYDLFSILRKPSSLLTGENAVVIVFNMYDRNRDRSRLKVVGEEENQHGTFTKLAKQGSVRAARKAQGILQWIKRFVTGKEPQRA.

The region spanning 71–144 (EVPKEFICTL…TQWCLVNKYD (74 aa)) is the U-box domain. ARM repeat units lie at residues 241–281 (ESNK…SLSA) and 283–322 (DSNKIIIGNSEAVKALIDLIEEGDLLATKEATSTVFNLCI).

The enzyme catalyses S-ubiquitinyl-[E2 ubiquitin-conjugating enzyme]-L-cysteine + [acceptor protein]-L-lysine = [E2 ubiquitin-conjugating enzyme]-L-cysteine + N(6)-ubiquitinyl-[acceptor protein]-L-lysine.. It participates in protein modification; protein ubiquitination. In terms of biological role, functions as an E3 ubiquitin ligase. The polypeptide is Putative U-box domain-containing protein 46 (PUB46) (Arabidopsis thaliana (Mouse-ear cress)).